Consider the following 336-residue polypeptide: Holliday junction branch migration complex subunit RuvB (336 aa).

The segment at 4 to 184 is large ATPase domain (RuvB-L); it reads ADRLISAGTT…FGIVQRLEFY (181 aa). ATP-binding positions include isoleucine 23, arginine 24, glycine 65, lysine 68, threonine 69, threonine 70, 131 to 133, arginine 174, tyrosine 184, and arginine 221; that span reads EDY. Threonine 69 provides a ligand contact to Mg(2+). Residues 185–255 are small ATPAse domain (RuvB-S); sequence QVPDLQYIVS…IAAQALDMLN (71 aa). Residues 258–336 are head domain (RuvB-H); that stretch reads AEGFDYMDRK…HFGITPPEMP (79 aa). DNA contacts are provided by arginine 294, arginine 313, and arginine 318.

The protein belongs to the RuvB family. In terms of assembly, homohexamer. Forms an RuvA(8)-RuvB(12)-Holliday junction (HJ) complex. HJ DNA is sandwiched between 2 RuvA tetramers; dsDNA enters through RuvA and exits via RuvB. An RuvB hexamer assembles on each DNA strand where it exits the tetramer. Each RuvB hexamer is contacted by two RuvA subunits (via domain III) on 2 adjacent RuvB subunits; this complex drives branch migration. In the full resolvosome a probable DNA-RuvA(4)-RuvB(12)-RuvC(2) complex forms which resolves the HJ.

The protein resides in the cytoplasm. The enzyme catalyses ATP + H2O = ADP + phosphate + H(+). In terms of biological role, the RuvA-RuvB-RuvC complex processes Holliday junction (HJ) DNA during genetic recombination and DNA repair, while the RuvA-RuvB complex plays an important role in the rescue of blocked DNA replication forks via replication fork reversal (RFR). RuvA specifically binds to HJ cruciform DNA, conferring on it an open structure. The RuvB hexamer acts as an ATP-dependent pump, pulling dsDNA into and through the RuvAB complex. RuvB forms 2 homohexamers on either side of HJ DNA bound by 1 or 2 RuvA tetramers; 4 subunits per hexamer contact DNA at a time. Coordinated motions by a converter formed by DNA-disengaged RuvB subunits stimulates ATP hydrolysis and nucleotide exchange. Immobilization of the converter enables RuvB to convert the ATP-contained energy into a lever motion, pulling 2 nucleotides of DNA out of the RuvA tetramer per ATP hydrolyzed, thus driving DNA branch migration. The RuvB motors rotate together with the DNA substrate, which together with the progressing nucleotide cycle form the mechanistic basis for DNA recombination by continuous HJ branch migration. Branch migration allows RuvC to scan DNA until it finds its consensus sequence, where it cleaves and resolves cruciform DNA. The chain is Holliday junction branch migration complex subunit RuvB from Escherichia coli (strain ATCC 8739 / DSM 1576 / NBRC 3972 / NCIMB 8545 / WDCM 00012 / Crooks).